The following is a 131-amino-acid chain: Ribonuclease VapC30 (131 aa).

The PINc domain occupies 1–129 (MVIDTSALVA…FQHTDIATVA (129 aa)). Positions 4 and 99 each coordinate Mg(2+).

It belongs to the PINc/VapC protein family. The cofactor is Mg(2+).

In terms of biological role, toxic component of a type II toxin-antitoxin (TA) system. An RNase. Its toxic effect is neutralized by coexpression with cognate antitoxin VapB30. The chain is Ribonuclease VapC30 from Mycobacterium tuberculosis (strain CDC 1551 / Oshkosh).